The following is a 469-amino-acid chain: Adenosylhomocysteinase (469 aa).

Residues threonine 63, aspartate 139, and glutamate 164 each coordinate substrate. Residue 165–167 (TTT) participates in NAD(+) binding. Residues lysine 194 and aspartate 198 each contribute to the substrate site. Residues asparagine 199, 228–233 (GYGDVG), glutamate 251, asparagine 300, 321–323 (IGH), and asparagine 375 each bind NAD(+).

This sequence belongs to the adenosylhomocysteinase family. It depends on NAD(+) as a cofactor.

Its subcellular location is the cytoplasm. The enzyme catalyses S-adenosyl-L-homocysteine + H2O = L-homocysteine + adenosine. It participates in amino-acid biosynthesis; L-homocysteine biosynthesis; L-homocysteine from S-adenosyl-L-homocysteine: step 1/1. Its function is as follows. May play a key role in the regulation of the intracellular concentration of adenosylhomocysteine. The protein is Adenosylhomocysteinase of Pseudomonas fluorescens (strain SBW25).